A 467-amino-acid polypeptide reads, in one-letter code: 3-isopropylmalate dehydratase large subunit (467 aa).

[4Fe-4S] cluster contacts are provided by C347, C407, and C410.

Belongs to the aconitase/IPM isomerase family. LeuC type 1 subfamily. In terms of assembly, heterodimer of LeuC and LeuD. [4Fe-4S] cluster serves as cofactor.

The catalysed reaction is (2R,3S)-3-isopropylmalate = (2S)-2-isopropylmalate. It functions in the pathway amino-acid biosynthesis; L-leucine biosynthesis; L-leucine from 3-methyl-2-oxobutanoate: step 2/4. Functionally, catalyzes the isomerization between 2-isopropylmalate and 3-isopropylmalate, via the formation of 2-isopropylmaleate. This Synechococcus sp. (strain JA-3-3Ab) (Cyanobacteria bacterium Yellowstone A-Prime) protein is 3-isopropylmalate dehydratase large subunit.